Here is a 135-residue protein sequence, read N- to C-terminus: Interleukin-4 (135 aa).

A signal peptide spans 1 to 24; the sequence is MGLTYQLIPVLVCLLVCTSHFAHG. Intrachain disulfides connect cysteine 27-cysteine 135, cysteine 48-cysteine 85, and cysteine 70-cysteine 105. Asparagine 62 carries an N-linked (GlcNAc...) asparagine glycan.

The protein belongs to the IL-4/IL-13 family.

The protein resides in the secreted. Participates in at least several B-cell activation processes as well as of other cell types. It is a costimulator of DNA-synthesis. It induces the expression of class II MHC molecules on resting B-cells. It enhances both secretion and cell surface expression of IgE and IgG1. It also regulates the expression of the low affinity Fc receptor for IgE (CD23) on both lymphocytes and monocytes. Positively regulates IL31RA expression in macrophages. Stimulates autophagy in dendritic cells by interfering with mTORC1 signaling and through the induction of RUFY4. The protein is Interleukin-4 (IL4) of Boselaphus tragocamelus (Nilgai).